We begin with the raw amino-acid sequence, 1849 residues long: SH3 and multiple ankyrin repeat domains protein 2 (1849 aa).

Residues 1–33 (MPRSPTSSEDEMAQSFSDYSVGSESDSSKEETI) are disordered. A compositionally biased stretch (low complexity) spans 15-25 (SFSDYSVGSES). ANK repeat units lie at residues 196-226 (TGETPLTLAAQLDDSVEVIKALKNGGAHLDF), 230-259 (DGMTALHKAARARNQVALKTLLELGASPDY), 263-293 (YGLTPLYHTAIVGGDPYCCELLLHEHATVCC), 297-326 (NGWHEIHQACRYGHVQHLEHLLFYGADMSA), 330-359 (SGNTALHICALYNQDSCARVLLFRGGNKEL), and 363-393 (NSQTPFQVAIIAGNFELAEYIKNHKETDIVP). Residues 451–493 (QQMPSKPEGAAKTIGSYVPGPRSRSPSLNRLGGAGEDGKRPQP) are disordered. The 60-residue stretch at 526-585 (VPGRLFVAVKPYQPQVDGEIPLHRGDRVKVLSIGEGGFWEGSARGHIGWFPAECVEEVQC) folds into the SH3 domain. The region spanning 626-720 (TVVLQKKDNE…HLVLKVVTVT (95 aa)) is the PDZ domain. The segment covering 764–774 (SVRKKKDKPEE) has biased composition (basic and acidic residues). The segment at 764–808 (SVRKKKDKPEEIVPASKPSRAAENMAVEPRVATIKQRPSSRCFPA) is disordered. A Phosphoserine modification is found at Ser831. The residue at position 860 (Thr860) is a Phosphothreonine. The tract at residues 878-910 (LSMPDTSEDIPPPPQSVPPSPPPPSPTTYNCPK) is disordered. Residues 887-903 (IPPPPQSVPPSPPPPSP) show a composition bias toward pro residues. Ser960 carries the phosphoserine modification. Disordered regions lie at residues 1013 to 1293 (LVKQ…RKGD), 1328 to 1371 (LQEE…TTVP), 1432 to 1526 (PALS…GGEN), and 1574 to 1594 (SFVIPPPAPPPPPGSAQPGMA). The segment covering 1040–1052 (STSSSGKSSQGSS) has biased composition (low complexity). Residues 1086-1097 (VRDREKRLEARR) show a composition bias toward basic and acidic residues. Ser1099 is subject to Phosphoserine. A compositionally biased stretch (acidic residues) spans 1128 to 1138 (EEGDFADEDSA). 3 stretches are compositionally biased toward low complexity: residues 1159 to 1170 (GGAEASAPGEAG), 1181 to 1199 (GPESSPAVPSASSGTAGPG), and 1208 to 1221 (RLLDPSSPLALALS). Positions 1274 to 1293 (RRQETENKYETDLGRDRKGD) are enriched in basic and acidic residues. A Phosphothreonine modification is found at Thr1278. Residues 1327-1333 (ALQEEDE) carry the SH3-binding motif. Residues 1343-1357 (SSPSEVPEGVSETEG) show a composition bias toward low complexity. Residues 1445–1460 (TPQSPSLNSSQPTNSA) show a composition bias toward polar residues. Over residues 1494-1505 (VDSRSSSDHHLE) the composition is skewed to basic and acidic residues. Low complexity predominate over residues 1506–1522 (TTSTISTVSSISTLSSE). A compositionally biased stretch (pro residues) spans 1577 to 1588 (IPPPAPPPPPGS). Thr1667 carries an O-linked (GlcNAc) threonine glycan. Residues 1678–1692 (FTVRPGTSQPITLQS) show a composition bias toward polar residues. The disordered stretch occupies residues 1678–1776 (FTVRPGTSQP…SILQQPISNK (99 aa)). Phosphoserine occurs at positions 1709 and 1713. Low complexity-rich tracts occupy residues 1721–1738 (TLPAPLSAATASPSPALS) and 1760–1774 (RSRSPSPSILQQPIS). Residues 1786–1849 (WTKPDVADWL…ERALKQLLDR (64 aa)) form the SAM domain.

It belongs to the SHANK family. Is part of a complex with DLG4/PSD-95 and DLGAP1/GKAP. Interacts with CTTN/cortactin SH3 domain, DLGAP1/GKAP and alpha-latrotoxin receptor 1. Interacts with DNM2, DBNL, GRID2, BAIAP2, SLC9A3, PLCB3 and CFTR. Interacts (via proline-rich region) with PDE4D. Interacts with ABI1 (via SH3 domain). Isoform 3 is present in epithelial colonic cells (at protein level).

It is found in the apical cell membrane. It localises to the cytoplasm. The protein resides in the synapse. The protein localises to the postsynaptic density. Its subcellular location is the cell projection. It is found in the growth cone. It localises to the dendritic spine. Functionally, seems to be an adapter protein in the postsynaptic density (PSD) of excitatory synapses that interconnects receptors of the postsynaptic membrane including NMDA-type and metabotropic glutamate receptors, and the actin-based cytoskeleton. May play a role in the structural and functional organization of the dendritic spine and synaptic junction. This chain is SH3 and multiple ankyrin repeat domains protein 2 (SHANK2), found in Homo sapiens (Human).